Here is a 338-residue protein sequence, read N- to C-terminus: Phosphoribosylformylglycinamidine cyclo-ligase (338 aa).

The protein belongs to the AIR synthase family.

It localises to the cytoplasm. The enzyme catalyses 2-formamido-N(1)-(5-O-phospho-beta-D-ribosyl)acetamidine + ATP = 5-amino-1-(5-phospho-beta-D-ribosyl)imidazole + ADP + phosphate + H(+). It functions in the pathway purine metabolism; IMP biosynthesis via de novo pathway; 5-amino-1-(5-phospho-D-ribosyl)imidazole from N(2)-formyl-N(1)-(5-phospho-D-ribosyl)glycinamide: step 2/2. This Thermoplasma acidophilum (strain ATCC 25905 / DSM 1728 / JCM 9062 / NBRC 15155 / AMRC-C165) protein is Phosphoribosylformylglycinamidine cyclo-ligase.